The sequence spans 632 residues: Myrcene synthase TPS3FN, chloroplastic (632 aa).

Residues Met1–Gln55 constitute a chloroplast transit peptide. Arg343, Asp380, Asp384, Arg524, and Asp527 together coordinate (2E)-geranyl diphosphate. 2 residues coordinate Mg(2+): Asp380 and Asp384. Positions Asp380–Asp384 match the DDXXD motif motif. Residues Asp527, Thr531, and Glu535 each coordinate Mg(2+).

The protein belongs to the terpene synthase family. Tpsb subfamily. Requires Mg(2+) as cofactor. Mn(2+) is required as a cofactor. In terms of tissue distribution, expressed in glandular trichomes two to four weeks after flowering onset.

It is found in the plastid. It localises to the chloroplast. It catalyses the reaction (2E)-geranyl diphosphate = beta-myrcene + diphosphate. It functions in the pathway secondary metabolite biosynthesis; terpenoid biosynthesis. Its function is as follows. Involved in monoterpene (C10) olefins biosynthesis, constituants of cannabinoids and terpenoids-rich resins. Catalyzes strictly the conversion of (2E)-geranyl diphosphate to beta-myrcene. This is Myrcene synthase TPS3FN, chloroplastic from Cannabis sativa (Hemp).